The following is a 1147-amino-acid chain: Nitric oxide synthase, inducible (1147 aa).

The segment at 22 to 51 is disordered; the sequence is KDINNNVEKTPGAIPSPTTQDDPKSHKHQN. The DINNN-motif; mediates interaction with SPSB1, SPSB2 and SPSB4 motif lies at 23-27; the sequence is DINNN. Cysteine 107 and cysteine 112 together coordinate Zn(2+). Serine 115 contacts (6R)-L-erythro-5,6,7,8-tetrahydrobiopterin. Cysteine 197 is a binding site for heme b. Glutamine 260, tryptophan 369, tyrosine 370, and glutamate 374 together coordinate L-arginine. (6R)-L-erythro-5,6,7,8-tetrahydrobiopterin contacts are provided by arginine 378, isoleucine 459, tryptophan 460, and phenylalanine 473. Residue tyrosine 488 coordinates heme b. Positions 512–532 are calmodulin-binding; the sequence is FTVLVKAVFFASVLMRKVMAS. Residues 536-674 form the Flavodoxin-like domain; the sequence is ATVLFATETG…AFRSWAVQTF (139 aa). 5 residues coordinate FMN: threonine 542, glutamate 543, threonine 544, lysine 546, and serine 547. Threonine 564 carries the phosphothreonine modification. Tyrosine 572 carries the phosphotyrosine modification. Positions 588, 589, 625, 632, 658, and 662 each coordinate FMN. The FAD-binding FR-type domain maps to 727–967; sequence KNVFTMRLKS…VRSVSGFQLP (241 aa). NADP(+) is bound at residue arginine 747. Histidine 769, arginine 903, tyrosine 905, serine 906, threonine 921, and alanine 923 together coordinate FAD. Threonine 926 serves as a coordination point for NADP(+). Residues tyrosine 927, valine 940, cysteine 941, and serine 942 each coordinate FAD. Residues threonine 981, arginine 1014, serine 1043, arginine 1044, lysine 1050, tyrosine 1052, glutamine 1054, and aspartate 1087 each coordinate NADP(+).

Belongs to the NOS family. Homodimer. Interacts with NHERF1. Interacts with GAPDH; induced by oxidatively-modified low-densitity lipoprotein (LDL(ox)). Interacts with S100A8 and S100A9 to form the iNOS-S100A8/9 transnitrosylase complex. Interacts with SPSB1, SPSB2 and SPSB4. Interacts with ELOC and CUL5 in the presence of SPSB1 or SPSB2 or SPSB4. Forms a complex with ASL, ASS1 and HSP90AA1; the complex regulates cell-autonomous L-arginine synthesis and citrulline recycling while channeling extracellular L-arginine to nitric oxide synthesis pathway. It depends on heme b as a cofactor. FAD serves as cofactor. The cofactor is FMN. Requires (6R)-L-erythro-5,6,7,8-tetrahydrobiopterin as cofactor. In terms of processing, polyubiquitinated; mediated by SPSB1, SPSB2 and SPSB4, leading to proteasomal degradation. In terms of tissue distribution, in normal kidney, expressed primarily in the medullary thick ascending limb, with minor amounts in the medullary collecting duct and vasa recta bundle.

The protein resides in the cytoplasm. Its subcellular location is the cytosol. It carries out the reaction 2 L-arginine + 3 NADPH + 4 O2 + H(+) = 2 L-citrulline + 2 nitric oxide + 3 NADP(+) + 4 H2O. Its activity is regulated as follows. Not stimulated by calcium/calmodulin. Aspirin inhibits expression and function of this enzyme and effects may be exerted at the level of translational/post-translational modification and directly on the catalytic activity. Produces nitric oxide (NO) which is a messenger molecule with diverse functions throughout the body. In macrophages, NO mediates tumoricidal and bactericidal actions. Also has nitrosylase activity and mediates cysteine S-nitrosylation of cytoplasmic target proteins such PTGS2/COX2. As component of the iNOS-S100A8/9 transnitrosylase complex involved in the selective inflammatory stimulus-dependent S-nitrosylation of GAPDH implicated in regulation of the GAIT complex activity and probably multiple targets including ANXA5, EZR, MSN and VIM. Involved in inflammation, enhances the synthesis of pro-inflammatory mediators such as IL6 and IL8. This Rattus norvegicus (Rat) protein is Nitric oxide synthase, inducible (Nos2).